The following is a 366-amino-acid chain: tRNA/tmRNA (uracil-C(5))-methyltransferase (366 aa).

S-adenosyl-L-methionine contacts are provided by glutamine 190, tyrosine 218, asparagine 223, glutamate 239, and aspartate 299. Cysteine 324 functions as the Nucleophile in the catalytic mechanism. Glutamate 358 serves as the catalytic Proton acceptor.

It belongs to the class I-like SAM-binding methyltransferase superfamily. RNA M5U methyltransferase family. TrmA subfamily.

It catalyses the reaction uridine(54) in tRNA + S-adenosyl-L-methionine = 5-methyluridine(54) in tRNA + S-adenosyl-L-homocysteine + H(+). The catalysed reaction is uridine(341) in tmRNA + S-adenosyl-L-methionine = 5-methyluridine(341) in tmRNA + S-adenosyl-L-homocysteine + H(+). Dual-specificity methyltransferase that catalyzes the formation of 5-methyluridine at position 54 (m5U54) in all tRNAs, and that of position 341 (m5U341) in tmRNA (transfer-mRNA). This Salmonella agona (strain SL483) protein is tRNA/tmRNA (uracil-C(5))-methyltransferase.